The sequence spans 264 residues: COP9 signalosome complex subunit 7b (264 aa).

A2 is modified (N-acetylalanine). Residues 2–159 (AGEQKPSSNL…QLLEVDFCIG (158 aa)) form the PCI domain. Positions 188–237 (IEQQVLRANQYKENHNRTQQQVEAEVTNIKKTLKATASSSAQEMEQQLAE) form a coiled coil. The segment covering 223–232 (TASSSAQEME) has biased composition (polar residues). Residues 223–264 (TASSSAQEMEQQLAERECPPHAEQRQPTKKMSKVKGLVSSRH) are disordered. Positions 235 to 248 (LAERECPPHAEQRQ) are enriched in basic and acidic residues. S261 carries the post-translational modification Phosphothreonine. R263 carries the post-translational modification Phosphoserine.

Belongs to the CSN7/EIF3M family. CSN7 subfamily. Component of the CSN complex, composed of COPS1/GPS1, COPS2, COPS3, COPS4, COPS5, COPS6, COPS7 (COPS7A or COPS7B), COPS8 and COPS9 isoform 1. In the complex, it probably interacts directly with COPS1, COPS2, COPS4, COPS5, COPS6 and COPS8. Interacts with EIF3S6. As to quaternary structure, (Microbial infection) Interacts with vaccinia virus protein C9L.

It is found in the cytoplasm. The protein resides in the nucleus. Functionally, component of the COP9 signalosome complex (CSN), a complex involved in various cellular and developmental processes. The CSN complex is an essential regulator of the ubiquitin (Ubl) conjugation pathway by mediating the deneddylation of the cullin subunits of SCF-type E3 ligase complexes, leading to decrease the Ubl ligase activity of SCF-type complexes such as SCF, CSA or DDB2. The complex is also involved in phosphorylation of p53/TP53, JUN, I-kappa-B-alpha/NFKBIA, ITPK1 and IRF8/ICSBP, possibly via its association with CK2 and PKD kinases. CSN-dependent phosphorylation of TP53 and JUN promotes and protects degradation by the Ubl system, respectively. In Homo sapiens (Human), this protein is COP9 signalosome complex subunit 7b (COPS7B).